A 94-amino-acid polypeptide reads, in one-letter code: Aspartyl/glutamyl-tRNA(Asn/Gln) amidotransferase subunit C (94 aa).

It belongs to the GatC family. In terms of assembly, heterotrimer of A, B and C subunits.

It catalyses the reaction L-glutamyl-tRNA(Gln) + L-glutamine + ATP + H2O = L-glutaminyl-tRNA(Gln) + L-glutamate + ADP + phosphate + H(+). The catalysed reaction is L-aspartyl-tRNA(Asn) + L-glutamine + ATP + H2O = L-asparaginyl-tRNA(Asn) + L-glutamate + ADP + phosphate + 2 H(+). In terms of biological role, allows the formation of correctly charged Asn-tRNA(Asn) or Gln-tRNA(Gln) through the transamidation of misacylated Asp-tRNA(Asn) or Glu-tRNA(Gln) in organisms which lack either or both of asparaginyl-tRNA or glutaminyl-tRNA synthetases. The reaction takes place in the presence of glutamine and ATP through an activated phospho-Asp-tRNA(Asn) or phospho-Glu-tRNA(Gln). This Opitutus terrae (strain DSM 11246 / JCM 15787 / PB90-1) protein is Aspartyl/glutamyl-tRNA(Asn/Gln) amidotransferase subunit C.